A 451-amino-acid polypeptide reads, in one-letter code: Tubulin beta-4 chain (451 aa).

GTP-binding residues include glutamine 11, glutamate 69, serine 138, glycine 142, threonine 143, glycine 144, asparagine 204, and asparagine 226. Residue glutamate 69 participates in Mg(2+) binding. A compositionally biased stretch (polar residues) spans 417–427 (DLVSEYQQYQD). The disordered stretch occupies residues 417-451 (DLVSEYQQYQDATAEEEGEYDEDDGGYGDEDDGMM). Positions 429–451 (TAEEEGEYDEDDGGYGDEDDGMM) are enriched in acidic residues.

The protein belongs to the tubulin family. As to quaternary structure, dimer of alpha and beta chains. A typical microtubule is a hollow water-filled tube with an outer diameter of 25 nm and an inner diameter of 15 nM. Alpha-beta heterodimers associate head-to-tail to form protofilaments running lengthwise along the microtubule wall with the beta-tubulin subunit facing the microtubule plus end conferring a structural polarity. Microtubules usually have 13 protofilaments but different protofilament numbers can be found in some organisms and specialized cells. The cofactor is Mg(2+).

Its subcellular location is the cytoplasm. It localises to the cytoskeleton. Its function is as follows. Tubulin is the major constituent of microtubules, a cylinder consisting of laterally associated linear protofilaments composed of alpha- and beta-tubulin heterodimers. Microtubules grow by the addition of GTP-tubulin dimers to the microtubule end, where a stabilizing cap forms. Below the cap, tubulin dimers are in GDP-bound state, owing to GTPase activity of alpha-tubulin. The chain is Tubulin beta-4 chain (TUBB4) from Oomycete-like sp. (strain MacKay2000).